The primary structure comprises 517 residues: Ribose import ATP-binding protein RbsA 2 (517 aa).

2 consecutive ABC transporter domains span residues 11-251 and 263-507; these read LEMR…VGRD and YDPG…ALAT. Position 43 to 50 (43 to 50) interacts with ATP; it reads GENGAGKS.

It belongs to the ABC transporter superfamily. Ribose importer (TC 3.A.1.2.1) family. As to quaternary structure, the complex is composed of an ATP-binding protein (RbsA), two transmembrane proteins (RbsC) and a solute-binding protein (RbsB).

It localises to the cell inner membrane. It catalyses the reaction D-ribose(out) + ATP + H2O = D-ribose(in) + ADP + phosphate + H(+). In terms of biological role, part of the ABC transporter complex RbsABC involved in ribose import. Responsible for energy coupling to the transport system. This Burkholderia pseudomallei (strain 1710b) protein is Ribose import ATP-binding protein RbsA 2.